The chain runs to 723 residues: Fatty acid oxidation complex subunit alpha (723 aa).

An enoyl-CoA hydratase/isomerase region spans residues 1–189 (MIYQAETLQV…KIGLLDAVVD (189 aa)). Asp296 contributes to the substrate binding site. The interval 311–723 (NKETQRAAVL…FYGAQQQGSI (413 aa)) is 3-hydroxyacyl-CoA dehydrogenase. Residues Met325, Asp344, 401 to 403 (VVE), Lys408, and Ser430 each bind NAD(+). The For 3-hydroxyacyl-CoA dehydrogenase activity role is filled by His451. Residue Asn454 participates in NAD(+) binding. Substrate is bound by residues Asn501 and Tyr661.

It in the N-terminal section; belongs to the enoyl-CoA hydratase/isomerase family. The protein in the C-terminal section; belongs to the 3-hydroxyacyl-CoA dehydrogenase family. Heterotetramer of two alpha chains (FadB) and two beta chains (FadA).

It carries out the reaction a (3S)-3-hydroxyacyl-CoA + NAD(+) = a 3-oxoacyl-CoA + NADH + H(+). The enzyme catalyses a (3S)-3-hydroxyacyl-CoA = a (2E)-enoyl-CoA + H2O. It catalyses the reaction a 4-saturated-(3S)-3-hydroxyacyl-CoA = a (3E)-enoyl-CoA + H2O. The catalysed reaction is (3S)-3-hydroxybutanoyl-CoA = (3R)-3-hydroxybutanoyl-CoA. It carries out the reaction a (3Z)-enoyl-CoA = a 4-saturated (2E)-enoyl-CoA. The enzyme catalyses a (3E)-enoyl-CoA = a 4-saturated (2E)-enoyl-CoA. It participates in lipid metabolism; fatty acid beta-oxidation. Involved in the aerobic and anaerobic degradation of long-chain fatty acids via beta-oxidation cycle. Catalyzes the formation of 3-oxoacyl-CoA from enoyl-CoA via L-3-hydroxyacyl-CoA. It can also use D-3-hydroxyacyl-CoA and cis-3-enoyl-CoA as substrate. The protein is Fatty acid oxidation complex subunit alpha of Vibrio vulnificus (strain YJ016).